A 345-amino-acid polypeptide reads, in one-letter code: tRNA pseudouridine synthase B (345 aa).

The Nucleophile role is filled by D39.

The protein belongs to the pseudouridine synthase TruB family. Type 1 subfamily.

It carries out the reaction uridine(55) in tRNA = pseudouridine(55) in tRNA. Responsible for synthesis of pseudouridine from uracil-55 in the psi GC loop of transfer RNAs. In Rickettsia africae (strain ESF-5), this protein is tRNA pseudouridine synthase B.